The following is a 156-amino-acid chain: 6,7-dimethyl-8-ribityllumazine synthase (156 aa).

Residues Phe-22, Ala-56 to Glu-58, and Ala-80 to Ile-82 contribute to the 5-amino-6-(D-ribitylamino)uracil site. Ser-85 to Thr-86 is a (2S)-2-hydroxy-3-oxobutyl phosphate binding site. His-88 functions as the Proton donor in the catalytic mechanism. Phe-113 is a 5-amino-6-(D-ribitylamino)uracil binding site. A (2S)-2-hydroxy-3-oxobutyl phosphate-binding site is contributed by Arg-127.

Belongs to the DMRL synthase family.

It catalyses the reaction (2S)-2-hydroxy-3-oxobutyl phosphate + 5-amino-6-(D-ribitylamino)uracil = 6,7-dimethyl-8-(1-D-ribityl)lumazine + phosphate + 2 H2O + H(+). Its pathway is cofactor biosynthesis; riboflavin biosynthesis; riboflavin from 2-hydroxy-3-oxobutyl phosphate and 5-amino-6-(D-ribitylamino)uracil: step 1/2. Catalyzes the formation of 6,7-dimethyl-8-ribityllumazine by condensation of 5-amino-6-(D-ribitylamino)uracil with 3,4-dihydroxy-2-butanone 4-phosphate. This is the penultimate step in the biosynthesis of riboflavin. The polypeptide is 6,7-dimethyl-8-ribityllumazine synthase (Caldicellulosiruptor saccharolyticus (strain ATCC 43494 / DSM 8903 / Tp8T 6331)).